The sequence spans 109 residues: Arminin 6560 (109 aa).

A signal peptide spans M1–G21. Positions V22–I77 are excised as a propeptide. I106 is subject to Isoleucine amide.

This sequence belongs to the arminin family. In terms of tissue distribution, expressed in the ectodermal epithelium.

It is found in the secreted. Its subcellular location is the target cell membrane. Its function is as follows. Antimicrobial peptide with a broad-spectrum antimicrobial activity. Keeps its antibacterial activity under a wide range of salt concentrations that mimic physiological conditions of human blood, which is surprising, since Hydra is an obligate freshwater animal with nearly no salt tolerance. Does not affect red blood cells. This Hydra vulgaris (Hydra) protein is Arminin 6560.